A 432-amino-acid chain; its full sequence is ATP-dependent RNA helicase RhlB (432 aa).

Positions 9–37 match the Q motif motif; it reads QNFADLGLQPQVIDGLNAKGFIKCTPIQA. The Helicase ATP-binding domain occupies 40–219; that stretch reads LPVLLAGQDI…FEHMQEPEHV (180 aa). ATP is bound at residue 53–60; that stretch reads AQTGTGKT. The DEAD box signature appears at 165 to 168; sequence DEAD. The region spanning 245–390 is the Helicase C-terminal domain; it reads ALLQTLIEEE…QSDYDASALL (146 aa). The interval 397-432 is disordered; the sequence is LRLQRRPQQNRRNNNGQRQGGNRKHSRPRQPRNTQS. A compositionally biased stretch (basic residues) spans 417-426; that stretch reads GNRKHSRPRQ.

Belongs to the DEAD box helicase family. RhlB subfamily. Component of the RNA degradosome, which is a multiprotein complex involved in RNA processing and mRNA degradation.

It is found in the cytoplasm. The enzyme catalyses ATP + H2O = ADP + phosphate + H(+). In terms of biological role, DEAD-box RNA helicase involved in RNA degradation. Has RNA-dependent ATPase activity and unwinds double-stranded RNA. In Aliivibrio fischeri (strain MJ11) (Vibrio fischeri), this protein is ATP-dependent RNA helicase RhlB.